Reading from the N-terminus, the 302-residue chain is tRNA dimethylallyltransferase (302 aa).

21–28 (GPTASGKS) contacts ATP. 23-28 (TASGKS) lines the substrate pocket.

This sequence belongs to the IPP transferase family. As to quaternary structure, monomer. It depends on Mg(2+) as a cofactor.

It catalyses the reaction adenosine(37) in tRNA + dimethylallyl diphosphate = N(6)-dimethylallyladenosine(37) in tRNA + diphosphate. In terms of biological role, catalyzes the transfer of a dimethylallyl group onto the adenine at position 37 in tRNAs that read codons beginning with uridine, leading to the formation of N6-(dimethylallyl)adenosine (i(6)A). In Paracoccus denitrificans (strain Pd 1222), this protein is tRNA dimethylallyltransferase.